A 370-amino-acid polypeptide reads, in one-letter code: Glutamate 5-kinase (370 aa).

Residue Lys-17 coordinates ATP. Substrate is bound by residues Ser-56, Asp-143, and Asn-155. Residue 175–176 (SD) participates in ATP binding. The PUA domain occupies 280–357 (KGEITVDAGA…DEIEGILGYP (78 aa)).

Belongs to the glutamate 5-kinase family.

It localises to the cytoplasm. The enzyme catalyses L-glutamate + ATP = L-glutamyl 5-phosphate + ADP. It functions in the pathway amino-acid biosynthesis; L-proline biosynthesis; L-glutamate 5-semialdehyde from L-glutamate: step 1/2. In terms of biological role, catalyzes the transfer of a phosphate group to glutamate to form L-glutamate 5-phosphate. This Paracoccus denitrificans (strain Pd 1222) protein is Glutamate 5-kinase.